The sequence spans 62 residues: Glucagon (62 aa).

Belongs to the glucagon family.

It localises to the secreted. In terms of biological role, promotes hydrolysis of glycogen and lipids, and raises the blood sugar level. The polypeptide is Glucagon (gcg) (Scyliorhinus canicula (Small-spotted catshark)).